Consider the following 323-residue polypeptide: Transmembrane protein 171 (323 aa).

A run of 4 helical transmembrane segments spans residues I22 to F42, M57 to A77, L112 to V132, and F159 to V179. The span at Y251–A268 shows a compositional bias: polar residues. Residues Y251–P323 form a disordered region. Low complexity predominate over residues S281–S290.

It is found in the membrane. This is Transmembrane protein 171 (Tmem171) from Rattus norvegicus (Rat).